We begin with the raw amino-acid sequence, 116 residues long: Large ribosomal subunit protein bL19 (116 aa).

This sequence belongs to the bacterial ribosomal protein bL19 family.

Its function is as follows. This protein is located at the 30S-50S ribosomal subunit interface and may play a role in the structure and function of the aminoacyl-tRNA binding site. This chain is Large ribosomal subunit protein bL19, found in Flavobacterium johnsoniae (strain ATCC 17061 / DSM 2064 / JCM 8514 / BCRC 14874 / CCUG 350202 / NBRC 14942 / NCIMB 11054 / UW101) (Cytophaga johnsonae).